Here is a 272-residue protein sequence, read N- to C-terminus: METYAVFGNPIAHSKSPFIHQQFAQQLNIEHPYGRVLAPINDFINTLNAFFSAGGKGANVTVPFKEEAFARADELTERAALAGAVNTLKRLEDGRLLGDNTDGIGLLSDLERLSFIRPGLRILLIGAGGASRGVLLPLLSLDCAVTITNRTVSRAEELAKLFAHTGSIQALGMDELEGHEFDLIINATSSGISGDIPAIPASLIHSGMCCYDMFYQKGKTPFLAWCELRGSKRNADGLGMLVAQAAHAFLLWHGVLPDIEPVIKQLQEELSA.

Shikimate is bound by residues 14 to 16 (SKS) and T61. The Proton acceptor role is filled by K65. E77 lines the NADP(+) pocket. Shikimate contacts are provided by N86 and D102. Residues 126–130 (GAGGA), 149–154 (NRTVSR), and M213 each bind NADP(+). Residue Y215 coordinates shikimate. G237 is a binding site for NADP(+).

It belongs to the shikimate dehydrogenase family. In terms of assembly, homodimer.

It carries out the reaction shikimate + NADP(+) = 3-dehydroshikimate + NADPH + H(+). It functions in the pathway metabolic intermediate biosynthesis; chorismate biosynthesis; chorismate from D-erythrose 4-phosphate and phosphoenolpyruvate: step 4/7. Its function is as follows. Involved in the biosynthesis of the chorismate, which leads to the biosynthesis of aromatic amino acids. Catalyzes the reversible NADPH linked reduction of 3-dehydroshikimate (DHSA) to yield shikimate (SA). This is Shikimate dehydrogenase (NADP(+)) from Escherichia coli O7:K1 (strain IAI39 / ExPEC).